Consider the following 184-residue polypeptide: NADH-quinone oxidoreductase subunit B (184 aa).

The [4Fe-4S] cluster site is built by Cys63, Cys64, Cys128, and Cys158.

This sequence belongs to the complex I 20 kDa subunit family. In terms of assembly, NDH-1 is composed of 14 different subunits. Subunits NuoB, C, D, E, F, and G constitute the peripheral sector of the complex. Requires [4Fe-4S] cluster as cofactor.

It is found in the cell inner membrane. The catalysed reaction is a quinone + NADH + 5 H(+)(in) = a quinol + NAD(+) + 4 H(+)(out). In terms of biological role, NDH-1 shuttles electrons from NADH, via FMN and iron-sulfur (Fe-S) centers, to quinones in the respiratory chain. The immediate electron acceptor for the enzyme in this species is believed to be ubiquinone. Couples the redox reaction to proton translocation (for every two electrons transferred, four hydrogen ions are translocated across the cytoplasmic membrane), and thus conserves the redox energy in a proton gradient. This Xylella fastidiosa (strain M12) protein is NADH-quinone oxidoreductase subunit B.